We begin with the raw amino-acid sequence, 1091 residues long: Methionine S-methyltransferase (1091 aa).

Belongs to the class I-like SAM-binding methyltransferase superfamily. Homotetramer.

The protein localises to the cytoplasm. The catalysed reaction is L-methionine + S-adenosyl-L-methionine = S-methyl-L-methionine + S-adenosyl-L-homocysteine. Catalyzes the S-methylmethionine (SMM) biosynthesis from adenosyl-L-homocysteine (AdoMet) and methionine. SMM biosynthesis (by MMT1) and degradation (by HMT-1, HMT-2 and HMT-3) constitute the SMM cycle in plants, which is probably required to achieve short term control of AdoMet level. Also able to catalyze the selenium-methylmethionine (SeMM) from AdoMet and selenium-methionine (SeMet). May play a role in phoem sulfur transport; such function is however not essential. The polypeptide is Methionine S-methyltransferase (MMT1) (Zea mays (Maize)).